The chain runs to 629 residues: Arginine--tRNA ligase (629 aa).

The short motif at 128-138 (VNPTKPLHMGH) is the 'HIGH' region element.

Belongs to the class-I aminoacyl-tRNA synthetase family.

It localises to the cytoplasm. The enzyme catalyses tRNA(Arg) + L-arginine + ATP = L-arginyl-tRNA(Arg) + AMP + diphosphate. The chain is Arginine--tRNA ligase (argS) from Pyrococcus horikoshii (strain ATCC 700860 / DSM 12428 / JCM 9974 / NBRC 100139 / OT-3).